The chain runs to 95 residues: Protein S100-A10 (95 aa).

N6-acetyllysine is present on residues K23, K28, K54, and K57. An EF-hand domain is found at 47 to 82 (KDPLAVDKIMKDLDQCRDGKVGFQSFLSLVAGLIIA). Residues 60–71 (DQCRDGKVGFQS) are ancestral calcium site.

This sequence belongs to the S-100 family. As to quaternary structure, heterotetramer containing 2 light chains of S100A10/p11 and 2 heavy chains of ANXA2/p36. Interacts with SCN10A. Interacts with TASOR.

Functionally, because S100A10 induces the dimerization of ANXA2/p36, it may function as a regulator of protein phosphorylation in that the ANXA2 monomer is the preferred target (in vitro) of tyrosine-specific kinase. The protein is Protein S100-A10 (S100a10) of Rattus norvegicus (Rat).